The primary structure comprises 539 residues: Phosphoenolpyruvate carboxykinase (ATP) (539 aa).

Residues Arg-64, Tyr-206, and Lys-212 each contribute to the substrate site. ATP-binding positions include Lys-212, His-231, and 247-255; that span reads GLSGTGKTT. Residues Lys-212 and His-231 each contribute to the Mn(2+) site. Asp-268 contributes to the Mn(2+) binding site. ATP is bound by residues Glu-296, Arg-332, 448-449, and Thr-454; that span reads RI. Arg-332 is a substrate binding site.

This sequence belongs to the phosphoenolpyruvate carboxykinase (ATP) family. Monomer. Mn(2+) serves as cofactor.

The protein resides in the cytoplasm. It catalyses the reaction oxaloacetate + ATP = phosphoenolpyruvate + ADP + CO2. It participates in carbohydrate biosynthesis; gluconeogenesis. In terms of biological role, involved in the gluconeogenesis. Catalyzes the conversion of oxaloacetate (OAA) to phosphoenolpyruvate (PEP) through direct phosphoryl transfer between the nucleoside triphosphate and OAA. The chain is Phosphoenolpyruvate carboxykinase (ATP) from Erwinia tasmaniensis (strain DSM 17950 / CFBP 7177 / CIP 109463 / NCPPB 4357 / Et1/99).